The primary structure comprises 548 residues: Myrosinase (548 aa).

An N-terminal signal peptide occupies residues 1-20 (MKLLHGLALVFLLAAASCKA). Disulfide bonds link cysteine 26-cysteine 458, cysteine 34-cysteine 454, and cysteine 226-cysteine 236. Glutamine 59 serves as a coordination point for substrate. Residues histidine 76 and aspartate 90 each coordinate Zn(2+). A glycan (N-linked (GlcNAc...) asparagine) is linked at asparagine 110. Histidine 161 and asparagine 206 together coordinate substrate. Position 207 (glutamine 207) interacts with L-ascorbate. Asparagine 240 carries an N-linked (GlcNAc...) asparagine glycan. Arginine 281 serves as a coordination point for L-ascorbate. The N-linked (GlcNAc...) asparagine glycan is linked to asparagine 331. Tyrosine 352 is a binding site for substrate. Glutamate 429 (nucleophile) is an active-site residue. Substrate-binding positions include tryptophan 477 and 484–485 (EF). Asparagine 520 carries N-linked (GlcNAc...) asparagine glycosylation.

Belongs to the glycosyl hydrolase 1 family. In terms of assembly, homodimer. In vacuoles called myrosin grains of a certain class of cells, myrosin cells, distributed in the cotyledons and the axis of the embryo as well as in different organs of the growing plant.

Its subcellular location is the vacuole. It catalyses the reaction a thioglucoside + H2O = a sugar + a thiol.. In terms of biological role, degradation of glucosinolates (glucose residue linked by a thioglucoside bound to an amino acid derivative) to glucose, sulfate and any of the products: thiocyanates, isothiocyanates, nitriles, epithionitriles or oxazolidine-2-thiones. The polypeptide is Myrosinase (Brassica napus (Rape)).